The following is a 176-amino-acid chain: 3-hydroxyanthranilate 3,4-dioxygenase (176 aa).

An O2-binding site is contributed by Arg44. The Fe cation site is built by His48, Glu54, and His92. Glu54 contacts substrate. The substrate site is built by Arg96 and Glu106. Cys121, Cys124, Cys158, and Cys161 together coordinate Fe cation.

Belongs to the 3-HAO family. Homodimer. It depends on Fe(2+) as a cofactor.

It carries out the reaction 3-hydroxyanthranilate + O2 = (2Z,4Z)-2-amino-3-carboxymuconate 6-semialdehyde. It functions in the pathway cofactor biosynthesis; NAD(+) biosynthesis; quinolinate from L-kynurenine: step 3/3. Its function is as follows. Catalyzes the oxidative ring opening of 3-hydroxyanthranilate to 2-amino-3-carboxymuconate semialdehyde, which spontaneously cyclizes to quinolinate. The sequence is that of 3-hydroxyanthranilate 3,4-dioxygenase from Xanthomonas campestris pv. campestris (strain B100).